We begin with the raw amino-acid sequence, 257 residues long: tRNA (guanine-N(7)-)-methyltransferase (257 aa).

A disordered region spans residues 1–42 (MTVVVSDHQNPRPPGDDAAPLGRTGNRDRPPGSFFGRRKGHR). S-adenosyl-L-methionine contacts are provided by Glu84, Glu109, Asp136, and Asp158. Residue Asp158 is part of the active site. Residues Lys162 and Asp194 each coordinate substrate.

Belongs to the class I-like SAM-binding methyltransferase superfamily. TrmB family.

It catalyses the reaction guanosine(46) in tRNA + S-adenosyl-L-methionine = N(7)-methylguanosine(46) in tRNA + S-adenosyl-L-homocysteine. It participates in tRNA modification; N(7)-methylguanine-tRNA biosynthesis. Functionally, catalyzes the formation of N(7)-methylguanine at position 46 (m7G46) in tRNA. This Nitrobacter winogradskyi (strain ATCC 25391 / DSM 10237 / CIP 104748 / NCIMB 11846 / Nb-255) protein is tRNA (guanine-N(7)-)-methyltransferase.